The chain runs to 257 residues: Ribonuclease PH (257 aa).

Residues Arg-86 and 124 to 126 (GTR) contribute to the phosphate site.

The protein belongs to the RNase PH family. In terms of assembly, homohexameric ring arranged as a trimer of dimers.

The enzyme catalyses tRNA(n+1) + phosphate = tRNA(n) + a ribonucleoside 5'-diphosphate. Its function is as follows. Phosphorolytic 3'-5' exoribonuclease that plays an important role in tRNA 3'-end maturation. Removes nucleotide residues following the 3'-CCA terminus of tRNAs; can also add nucleotides to the ends of RNA molecules by using nucleoside diphosphates as substrates, but this may not be physiologically important. Probably plays a role in initiation of 16S rRNA degradation (leading to ribosome degradation) during starvation. The polypeptide is Ribonuclease PH (Sulfurihydrogenibium sp. (strain YO3AOP1)).